An 881-amino-acid polypeptide reads, in one-letter code: DNA replication helicase (881 aa).

90–97 (GNAGSGKS) contributes to the ATP binding site.

It belongs to the herpesviridae helicase family. Associates with the primase and the primase-associated factor to form the helicase-primase complex.

It localises to the host nucleus. In terms of biological role, component of the helicase/primase complex. Unwinds the DNA at the replication forks and generates single-stranded DNA for both leading and lagging strand synthesis. The primase synthesizes short RNA primers on the lagging strand that the polymerase elongates using dNTPs. Possesses helicase-like motifs and therefore may act as the helicase subunit of the complex. In Homo sapiens (Human), this protein is DNA replication helicase.